A 235-amino-acid chain; its full sequence is Large ribosomal subunit protein uL1 (235 aa).

Belongs to the universal ribosomal protein uL1 family. In terms of assembly, part of the 50S ribosomal subunit.

Functionally, binds directly to 23S rRNA. The L1 stalk is quite mobile in the ribosome, and is involved in E site tRNA release. Protein L1 is also a translational repressor protein, it controls the translation of the L11 operon by binding to its mRNA. The chain is Large ribosomal subunit protein uL1 from Parasynechococcus marenigrum (strain WH8102).